A 122-amino-acid chain; its full sequence is Ubiquitin-related modifier 1 (122 aa).

Positions 33-48 (PSTVPADNNTSVTTKD) are enriched in polar residues. A disordered region spans residues 33–52 (PSTVPADNNTSVTTKDAASP). Glycine 122 is subject to 1-thioglycine. Glycine 122 is covalently cross-linked (Glycyl lysine isopeptide (Gly-Lys) (interchain with K-? in acceptor proteins)).

The protein belongs to the URM1 family. C-terminal thiocarboxylation occurs in 2 steps, it is first acyl-adenylated (-COAMP) via the hesA/moeB/thiF part of UBA4, then thiocarboxylated (-COSH) via the rhodanese domain of UBA4.

It localises to the cytoplasm. Its pathway is tRNA modification; 5-methoxycarbonylmethyl-2-thiouridine-tRNA biosynthesis. Functionally, acts as a sulfur carrier required for 2-thiolation of mcm(5)S(2)U at tRNA wobble positions of cytosolic tRNA(Lys), tRNA(Glu) and tRNA(Gln). Serves as sulfur donor in tRNA 2-thiolation reaction by being thiocarboxylated (-COSH) at its C-terminus by the MOCS3 homolog UBA4. The sulfur is then transferred to tRNA to form 2-thiolation of mcm(5)S(2)U. Prior mcm(5) tRNA modification by the elongator complex is required for 2-thiolation. Also acts as a ubiquitin-like protein (UBL) that is covalently conjugated via an isopeptide bond to lysine residues of target proteins such as AHP1. The thiocarboxylated form serves as substrate for conjugation and oxidative stress specifically induces the formation of UBL-protein conjugates. The protein is Ubiquitin-related modifier 1 of Laccaria bicolor (strain S238N-H82 / ATCC MYA-4686) (Bicoloured deceiver).